Consider the following 345-residue polypeptide: tRNA N6-adenosine threonylcarbamoyltransferase (345 aa).

2 residues coordinate Fe cation: His-111 and His-115. Substrate contacts are provided by residues 136 to 140, Asp-169, Gly-182, and Asn-279; that span reads LVSGG. Position 307 (Asp-307) interacts with Fe cation.

It belongs to the KAE1 / TsaD family. Requires Fe(2+) as cofactor.

It is found in the cytoplasm. It carries out the reaction L-threonylcarbamoyladenylate + adenosine(37) in tRNA = N(6)-L-threonylcarbamoyladenosine(37) in tRNA + AMP + H(+). Its function is as follows. Required for the formation of a threonylcarbamoyl group on adenosine at position 37 (t(6)A37) in tRNAs that read codons beginning with adenine. Is involved in the transfer of the threonylcarbamoyl moiety of threonylcarbamoyl-AMP (TC-AMP) to the N6 group of A37, together with TsaE and TsaB. TsaD likely plays a direct catalytic role in this reaction. The polypeptide is tRNA N6-adenosine threonylcarbamoyltransferase (Actinobacillus succinogenes (strain ATCC 55618 / DSM 22257 / CCUG 43843 / 130Z)).